Reading from the N-terminus, the 164-residue chain is MTQVDYTRAAKYFLLQDFWVGMKLGMKYFFAPKATLNYPHEKGPLSPRFRGEHALRRYPNGEERCIACKLCEAVCPAQAITIDAEPRDDGSRRTTRYDIDMTKCIYCGFCEEACPVDAIVEGPNFEFSTETREELYYDKDRLLANGERWEAEIARNLEMDAPYR.

4Fe-4S ferredoxin-type domains lie at 55-85 and 95-124; these read LRRY…IDAE and TRYD…EGPN. The [4Fe-4S] cluster site is built by cysteine 65, cysteine 68, cysteine 71, cysteine 75, cysteine 104, cysteine 107, cysteine 110, and cysteine 114.

This sequence belongs to the complex I 23 kDa subunit family. NDH-1 is composed of 14 different subunits. Subunits NuoA, H, J, K, L, M, N constitute the membrane sector of the complex. [4Fe-4S] cluster serves as cofactor.

The protein localises to the cell inner membrane. It catalyses the reaction a quinone + NADH + 5 H(+)(in) = a quinol + NAD(+) + 4 H(+)(out). NDH-1 shuttles electrons from NADH, via FMN and iron-sulfur (Fe-S) centers, to quinones in the respiratory chain. The immediate electron acceptor for the enzyme in this species is believed to be ubiquinone. Couples the redox reaction to proton translocation (for every two electrons transferred, four hydrogen ions are translocated across the cytoplasmic membrane), and thus conserves the redox energy in a proton gradient. This is NADH-quinone oxidoreductase subunit I from Roseobacter denitrificans (strain ATCC 33942 / OCh 114) (Erythrobacter sp. (strain OCh 114)).